Reading from the N-terminus, the 641-residue chain is MTTHTQDIGKEVSSVIAQSWHRCSKFMQRETWQAPHQAQGLTFESICRRKTALLTIAQAALEDAWEFMDGRPCALLILDESACILSRCGDPQTVEQLAELGFRDGSYCAESIIGSCALSLATMPGQPTKTSGDQHFKQALHPWSFCSTPVFDNHGRLFGSISLCCLVEHECVSDLSLTLAIAREVGNSLLTDSLLAESNRHLNQMYGLLESMDDGVMAWNEQGVLQFLNARAALLLHLDAQASQGKNINDLLNLPMLLRRAIKHARGLNHVEVTFESQHQFVDAVITLKPIVEEQGNSFILLLHPVEQMRQLMTSQLGKVSHTFEQMSTDDPETRRLIHFGRQAARGSFPILLCGEEGVGKELLSQAIHNESERASGPYIAVNCQLYANSVLGQDFMGSAPTDDENGRLSRLELANGGTLFLEKIEYLAPELQSALLQVIKQGVLTRLDARRLIPVDVKVIATTTVDLANLVEQNRFSRQLYYALHSFEIVIPPLRARRNSIPSLIYTRLNSLKKRFSSSLKIDDDALAQLVAYSWPGNDFELNSIIENIAISSDNGHIRLSNLPDYLFAERPGLETASSLLPASLTFTAIEKEAIIHAARVTSGRVQEMSQLLNIGRTTLWRKMKQYDIDASQFKRKHLE.

The interval 1–318 (MTTHTQDIGK…MRQLMTSQLG (318 aa)) is sensor domain. The GAF domain occupies 52 to 189 (ALLTIAQAAL…AIAREVGNSL (138 aa)). In terms of domain architecture, PAS spans 203-265 (NQMYGLLESM…MLLRRAIKHA (63 aa)). One can recognise a Sigma-54 factor interaction domain in the interval 327–552 (MSTDDPETRR…LNSIIENIAI (226 aa)). Residues 355–362 (GEEGVGKE) and 415–424 (ANGGTLFLEK) contribute to the ATP site.

In terms of biological role, transcriptional activator of the glycerol utilization dha operon. The chain is Glycerol metabolism operon regulatory protein from Citrobacter freundii.